Here is a 272-residue protein sequence, read N- to C-terminus: 2-amino-3,7-dideoxy-D-threo-hept-6-ulosonate synthase (272 aa).

Catalysis depends on Asp-33, which acts as the Proton acceptor. 1-deoxy-D-threo-hexo-2,5-diulose 6-phosphate contacts are provided by residues 33 to 37 and 153 to 155; these read DHGVS and YPR. Tyr-153 serves as the catalytic Proton donor. The Schiff-base intermediate with substrate role is filled by Lys-184. 1-deoxy-D-threo-hexo-2,5-diulose 6-phosphate is bound by residues 209-210 and 237-238; these read GG and GR.

The protein belongs to the DeoC/FbaB aldolase family. ADHS subfamily. Homodecamer.

The catalysed reaction is 1-deoxy-D-threo-hexo-2,5-diulose 6-phosphate + L-aspartate 4-semialdehyde = 2,3-dioxopropyl phosphate + 2-amino-2,3,7-trideoxy-D-lyxo-hept-6-ulosonate. Functionally, catalyzes a transaldol reaction between 6-deoxy-5-ketofructose 1-phosphate (DKFP) and L-aspartate semialdehyde (ASA) with an elimination of hydroxypyruvaldehyde phosphate to yield 2-amino-3,7-dideoxy-D-threo-hept-6-ulosonate (ADH). Plays a key role in an alternative pathway of the biosynthesis of 3-dehydroquinate (DHQ), which is involved in the canonical pathway for the biosynthesis of aromatic amino acids and which is also a precursor for the biosynthesis of p-aminobenzoic acid (PABA) in M.maripaludis. Does not possess fructose-bisphosphate (FBP) aldolase activity. The chain is 2-amino-3,7-dideoxy-D-threo-hept-6-ulosonate synthase from Methanococcus maripaludis (strain DSM 14266 / JCM 13030 / NBRC 101832 / S2 / LL).